The following is a 255-amino-acid chain: Triosephosphate isomerase (255 aa).

9–11 (NWK) contributes to the substrate binding site. Catalysis depends on histidine 100, which acts as the Electrophile. Glutamate 169 serves as the catalytic Proton acceptor. Substrate contacts are provided by residues glycine 175, serine 208, and 229 to 230 (GG).

Belongs to the triosephosphate isomerase family. As to quaternary structure, homodimer.

The protein resides in the cytoplasm. The enzyme catalyses D-glyceraldehyde 3-phosphate = dihydroxyacetone phosphate. It functions in the pathway carbohydrate biosynthesis; gluconeogenesis. It participates in carbohydrate degradation; glycolysis; D-glyceraldehyde 3-phosphate from glycerone phosphate: step 1/1. Functionally, involved in the gluconeogenesis. Catalyzes stereospecifically the conversion of dihydroxyacetone phosphate (DHAP) to D-glyceraldehyde-3-phosphate (G3P). This is Triosephosphate isomerase from Synechococcus sp. (strain JA-3-3Ab) (Cyanobacteria bacterium Yellowstone A-Prime).